The primary structure comprises 433 residues: Serine hydroxymethyltransferase (433 aa).

121 to 123 contributes to the (6S)-5,6,7,8-tetrahydrofolate binding site; it reads AHV. K227 is subject to N6-(pyridoxal phosphate)lysine. E243 contributes to the (6S)-5,6,7,8-tetrahydrofolate binding site.

Belongs to the SHMT family. In terms of assembly, homodimer. Pyridoxal 5'-phosphate serves as cofactor.

The protein resides in the cytoplasm. The enzyme catalyses 5,10-methylenetetrahydrosulfopterin + glycine + H2O = tetrahydrosulfopterin + L-serine. The protein operates within amino-acid biosynthesis; glycine biosynthesis; glycine from L-serine: step 1/1. With respect to regulation, is completely inhibited by addition of NaCNBH(3) in vitro; this reagent is a known inhibitor of PLP enzymes, that reduces the internal aldimine of PLP to the catalytically inactive and stable secondary amine. Is also inhibited by L-cysteine, which forms a thiazolidine complex with the active site PLP. Its function is as follows. Catalyzes the reversible interconversion of serine and glycine with the modified folate sulfopterin serving as the one-carbon carrier. Cannot use tetrahydrofolate (THF or H4PteGlu) as the pteridine substrate. Also exhibits a pteridine-independent aldolase activity toward beta-hydroxyamino acids, producing glycine and aldehydes, via a retro-aldol mechanism. Thus, is able to catalyze the cleavage of both allo-threonine and beta-phenylserine. This chain is Serine hydroxymethyltransferase, found in Saccharolobus solfataricus (strain ATCC 35092 / DSM 1617 / JCM 11322 / P2) (Sulfolobus solfataricus).